The primary structure comprises 638 residues: Actin-regulating kinase 1 (638 aa).

The Protein kinase domain maps to 22-298 (VEIIKYLTSG…VYQLLKRISI (277 aa)). ATP is bound by residues 28–36 (LTSGGFAQV) and lysine 56. Aspartate 159 acts as the Proton acceptor in catalysis. Position 478 is a phosphoserine (serine 478). Positions 482–515 (YSTRGNIKKNQSVKESLTSSSLPGTSFTPTSTKV) are enriched in polar residues. A disordered region spans residues 482 to 518 (YSTRGNIKKNQSVKESLTSSSLPGTSFTPTSTKVNLK). Serine 522 and serine 535 each carry phosphoserine. Residues 569–638 (SEESFNARKM…LAGRKLSLDK (70 aa)) are disordered. Residues 582–593 (KLHEKGEIDKPT) show a composition bias toward basic and acidic residues. The interaction with SH3 domain of ABP1 stretch occupies residues 602–615 (SKDKKTKPTPPPKP).

Belongs to the protein kinase superfamily. Ser/Thr protein kinase family. As to quaternary structure, interacts with ABP1, which is required for proper actin patch localization.

The protein resides in the cytoplasm. Its subcellular location is the cytoskeleton. It is found in the actin patch. The enzyme catalyses L-seryl-[protein] + ATP = O-phospho-L-seryl-[protein] + ADP + H(+). It catalyses the reaction L-threonyl-[protein] + ATP = O-phospho-L-threonyl-[protein] + ADP + H(+). Functionally, involved in regulation of actin cytoskeleton organization and endocytosis. This chain is Actin-regulating kinase 1 (ARK1), found in Saccharomyces cerevisiae (strain ATCC 204508 / S288c) (Baker's yeast).